The sequence spans 528 residues: Cytochrome P450 monooxygenase lenC (528 aa).

Residues 5-27 (FVLPHPASMGASCILGLLLLTIL) traverse the membrane as a helical segment. Cysteine 469 provides a ligand contact to heme.

Belongs to the cytochrome P450 family. It depends on heme as a cofactor.

It is found in the membrane. The protein operates within alkaloid biosynthesis. Its function is as follows. Nonribosomal peptide synthetase; part of the gene cluster that mediates the biosynthesis of the ergot alkaloids lentopeptins A and B. Within the pathway, lenC catalyzes the post-NRPS oxidative modification steps using as substrate the N-acyldiketopiperazine intermediate produced by the NRPS lenA. Lentopeptin A forms via a stereospecific hydroxylation, followed by a spontaneous bicyclic lactam core formation, while lentopeptin B is produced through an initial dehydrogenation, followed by a bicyclic lactam core formation and stereospecific hydration. The phenylalanine ammonia-lyase lenB provides the cinnamic acid starter unit to the NRPS lenA for the synthesis of the N-acyldiketopiperazine intermediate which in turn is converted into lentopeptins A and B by lenC. The sequence is that of Cytochrome P450 monooxygenase lenC from Aspergillus lentulus.